Reading from the N-terminus, the 256-residue chain is NAD(P)H-hydrate epimerase (256 aa).

Basic and acidic residues predominate over residues 1–18 (MADPRRDPAAESKDRPST). Positions 1-21 (MADPRRDPAAESKDRPSTERV) are disordered. In terms of domain architecture, YjeF N-terminal spans 23-229 (AYTADAVRAA…DLGLEPYLRR (207 aa)). 74–78 (DNGGD) provides a ligand contact to (6S)-NADPHX. Positions 75 and 135 each coordinate K(+). (6S)-NADPHX-binding positions include 139-147 (GIGRLADRR) and aspartate 172. Serine 175 contacts K(+).

The protein belongs to the NnrE/AIBP family. It depends on K(+) as a cofactor.

It carries out the reaction (6R)-NADHX = (6S)-NADHX. The enzyme catalyses (6R)-NADPHX = (6S)-NADPHX. In terms of biological role, catalyzes the epimerization of the S- and R-forms of NAD(P)HX, a damaged form of NAD(P)H that is a result of enzymatic or heat-dependent hydration. This is a prerequisite for the S-specific NAD(P)H-hydrate dehydratase to allow the repair of both epimers of NAD(P)HX. In Microbacterium testaceum (strain StLB037), this protein is NAD(P)H-hydrate epimerase.